We begin with the raw amino-acid sequence, 145 residues long: RING-H2 finger protein ATL18 (145 aa).

Residues 1–29 form the signal peptide; sequence MISMLFPRSPLCTAAIVFYTCVCIPLGRL. Residues 62–105 form an RING-type; atypical zinc finger; it reads CPICLVEFEAEDAVTHLPRCAHLFHINCIEPWLLRGHLTCPLCR. A helical transmembrane segment spans residues 125 to 145; it reads STLYLSIFFFFCIFLHLLGYL.

Belongs to the RING-type zinc finger family. ATL subfamily.

The protein resides in the membrane. It catalyses the reaction S-ubiquitinyl-[E2 ubiquitin-conjugating enzyme]-L-cysteine + [acceptor protein]-L-lysine = [E2 ubiquitin-conjugating enzyme]-L-cysteine + N(6)-ubiquitinyl-[acceptor protein]-L-lysine.. The protein operates within protein modification; protein ubiquitination. The polypeptide is RING-H2 finger protein ATL18 (ATL18) (Arabidopsis thaliana (Mouse-ear cress)).